We begin with the raw amino-acid sequence, 83 residues long: Small ribosomal subunit protein bS16 (83 aa).

Belongs to the bacterial ribosomal protein bS16 family.

The polypeptide is Small ribosomal subunit protein bS16 (Verminephrobacter eiseniae (strain EF01-2)).